The following is a 231-amino-acid chain: WAP four-disulfide core domain protein 3 (231 aa).

Residues 1–24 form the signal peptide; that stretch reads MMLSCLFLLKALLALGSLESWITA. 4 WAP domains span residues 26-68, 69-114, 119-162, and 163-207; these read EHAK…CRDI, PKGR…VVPI, LAEF…LGDI, and EGGR…VPPV. 16 cysteine pairs are disulfide-bonded: cysteine 33/cysteine 57, cysteine 40/cysteine 61, cysteine 44/cysteine 56, cysteine 50/cysteine 65, cysteine 76/cysteine 102, cysteine 85/cysteine 106, cysteine 89/cysteine 101, cysteine 95/cysteine 110, cysteine 126/cysteine 150, cysteine 133/cysteine 154, cysteine 137/cysteine 149, cysteine 143/cysteine 158, cysteine 170/cysteine 195, cysteine 178/cysteine 199, cysteine 182/cysteine 194, and cysteine 188/cysteine 203. Asparagine 107 is a glycosylation site (N-linked (GlcNAc...) asparagine). Asparagine 217 carries an N-linked (GlcNAc...) asparagine glycan.

In terms of tissue distribution, ubiquitously expressed.

The protein localises to the secreted. In Homo sapiens (Human), this protein is WAP four-disulfide core domain protein 3 (WFDC3).